The chain runs to 365 residues: tRNA(Met) cytidine acetate ligase (365 aa).

Residues 7-20 (IAEF…HKYL), G96, N152, and R175 contribute to the ATP site.

Belongs to the TmcAL family.

Its subcellular location is the cytoplasm. The catalysed reaction is cytidine(34) in elongator tRNA(Met) + acetate + ATP = N(4)-acetylcytidine(34) in elongator tRNA(Met) + AMP + diphosphate. Its function is as follows. Catalyzes the formation of N(4)-acetylcytidine (ac(4)C) at the wobble position of elongator tRNA(Met), using acetate and ATP as substrates. First activates an acetate ion to form acetyladenylate (Ac-AMP) and then transfers the acetyl group to tRNA to form ac(4)C34. In Streptococcus pneumoniae (strain 70585), this protein is tRNA(Met) cytidine acetate ligase.